The chain runs to 104 residues: Large ribosomal subunit protein uL24 (104 aa).

The protein belongs to the universal ribosomal protein uL24 family. As to quaternary structure, part of the 50S ribosomal subunit.

Its function is as follows. One of two assembly initiator proteins, it binds directly to the 5'-end of the 23S rRNA, where it nucleates assembly of the 50S subunit. In terms of biological role, one of the proteins that surrounds the polypeptide exit tunnel on the outside of the subunit. This chain is Large ribosomal subunit protein uL24, found in Pseudomonas entomophila (strain L48).